Consider the following 59-residue polypeptide: Large ribosomal subunit protein bL32 (59 aa).

Over residues 1–16 (MAVPKRKVSPHRRGNR) the composition is skewed to basic residues. The segment at 1–20 (MAVPKRKVSPHRRGNRRAHD) is disordered.

It belongs to the bacterial ribosomal protein bL32 family.

This Erythrobacter litoralis (strain HTCC2594) protein is Large ribosomal subunit protein bL32.